A 105-amino-acid chain; its full sequence is Large ribosomal subunit protein uL24 (105 aa).

The protein belongs to the universal ribosomal protein uL24 family. In terms of assembly, part of the 50S ribosomal subunit.

In terms of biological role, one of two assembly initiator proteins, it binds directly to the 5'-end of the 23S rRNA, where it nucleates assembly of the 50S subunit. Its function is as follows. One of the proteins that surrounds the polypeptide exit tunnel on the outside of the subunit. This is Large ribosomal subunit protein uL24 from Wolbachia pipientis wMel.